Consider the following 126-residue polypeptide: Small ribosomal subunit protein uS12 (126 aa).

The segment at 1–29 (MPTIQQLIRQPRAPKKRRSKSPALQKCPQ) is disordered. The residue at position 89 (D89) is a 3-methylthioaspartic acid.

It belongs to the universal ribosomal protein uS12 family. In terms of assembly, part of the 30S ribosomal subunit. Contacts proteins S8 and S17. May interact with IF1 in the 30S initiation complex.

In terms of biological role, with S4 and S5 plays an important role in translational accuracy. Interacts with and stabilizes bases of the 16S rRNA that are involved in tRNA selection in the A site and with the mRNA backbone. Located at the interface of the 30S and 50S subunits, it traverses the body of the 30S subunit contacting proteins on the other side and probably holding the rRNA structure together. The combined cluster of proteins S8, S12 and S17 appears to hold together the shoulder and platform of the 30S subunit. This chain is Small ribosomal subunit protein uS12, found in Protochlamydia amoebophila (strain UWE25).